A 101-amino-acid polypeptide reads, in one-letter code: Apolipoprotein C-II (101 aa).

The first 22 residues, 1–22 (MGTRFLLALFLVLLVLGFEVQG), serve as a signal peptide directing secretion. Residues 66-74 (TVDEKLRDM) are lipid binding. The interval 78–101 (STAAMSTYAGILTDQVLSMLKGEE) is lipoprotein lipase cofactor.

It belongs to the apolipoprotein C2 family. Post-translationally, proapolipoprotein C-II is synthesized as a sialic acid containing glycoprotein which is subsequently desialylated prior to its proteolytic processing. In terms of processing, proapolipoprotein C-II, the major form found in plasma undergoes proteolytic cleavage of its N-terminal hexapeptide to generate apolipoprotein C-II, which occurs as the minor form in plasma.

It localises to the secreted. Its function is as follows. Component of chylomicrons, very low-density lipoproteins (VLDL), low-density lipoproteins (LDL), and high-density lipoproteins (HDL) in plasma. Plays an important role in lipoprotein metabolism as an activator of lipoprotein lipase. Both proapolipoprotein C-II and apolipoprotein C-II can activate lipoprotein lipase. The chain is Apolipoprotein C-II (APOC2) from Plecturocebus moloch (Dusky titi monkey).